We begin with the raw amino-acid sequence, 94 residues long: Pyrimidine/purine nucleoside phosphorylase (94 aa).

This sequence belongs to the nucleoside phosphorylase PpnP family.

The enzyme catalyses a purine D-ribonucleoside + phosphate = a purine nucleobase + alpha-D-ribose 1-phosphate. It carries out the reaction adenosine + phosphate = alpha-D-ribose 1-phosphate + adenine. It catalyses the reaction cytidine + phosphate = cytosine + alpha-D-ribose 1-phosphate. The catalysed reaction is guanosine + phosphate = alpha-D-ribose 1-phosphate + guanine. The enzyme catalyses inosine + phosphate = alpha-D-ribose 1-phosphate + hypoxanthine. It carries out the reaction thymidine + phosphate = 2-deoxy-alpha-D-ribose 1-phosphate + thymine. It catalyses the reaction uridine + phosphate = alpha-D-ribose 1-phosphate + uracil. The catalysed reaction is xanthosine + phosphate = alpha-D-ribose 1-phosphate + xanthine. Catalyzes the phosphorolysis of diverse nucleosides, yielding D-ribose 1-phosphate and the respective free bases. Can use uridine, adenosine, guanosine, cytidine, thymidine, inosine and xanthosine as substrates. Also catalyzes the reverse reactions. The polypeptide is Pyrimidine/purine nucleoside phosphorylase (Salmonella arizonae (strain ATCC BAA-731 / CDC346-86 / RSK2980)).